The primary structure comprises 651 residues: Acetyl-coenzyme A synthetase (651 aa).

Residues 189–192 (RGGK), Thr-311, and Asn-335 contribute to the CoA site. Residues 387–389 (GEP), 411–416 (DTWWQT), Asp-500, and Arg-515 contribute to the ATP site. Residue Ser-523 coordinates CoA. Arg-526 provides a ligand contact to ATP. Mg(2+) is bound by residues Val-537, His-539, and Val-542. Arg-584 lines the CoA pocket. Lys-609 bears the N6-acetyllysine mark.

The protein belongs to the ATP-dependent AMP-binding enzyme family. Mg(2+) serves as cofactor. Acetylated. Deacetylation by the SIR2-homolog deacetylase activates the enzyme.

The enzyme catalyses acetate + ATP + CoA = acetyl-CoA + AMP + diphosphate. Catalyzes the conversion of acetate into acetyl-CoA (AcCoA), an essential intermediate at the junction of anabolic and catabolic pathways. AcsA undergoes a two-step reaction. In the first half reaction, AcsA combines acetate with ATP to form acetyl-adenylate (AcAMP) intermediate. In the second half reaction, it can then transfer the acetyl group from AcAMP to the sulfhydryl group of CoA, forming the product AcCoA. The protein is Acetyl-coenzyme A synthetase of Allorhizobium ampelinum (strain ATCC BAA-846 / DSM 112012 / S4) (Agrobacterium vitis (strain S4)).